A 418-amino-acid polypeptide reads, in one-letter code: Actin-related protein 3 (418 aa).

This sequence belongs to the actin family. ARP3 subfamily. In terms of assembly, component of the Arp2/3 complex.

The protein localises to the cytoplasm. Its subcellular location is the cytoskeleton. Functions as ATP-binding component of the Arp2/3 complex which is involved in regulation of actin polymerization and together with an activating nucleation-promoting factor (NPF) mediates the formation of branched actin networks. Seems to contact the pointed end of the daughter actin filament. Required during embryogenesis for the developmental migration of tail hemocytes anteriorly, along the ventral midline. The polypeptide is Actin-related protein 3 (Drosophila melanogaster (Fruit fly)).